Reading from the N-terminus, the 295-residue chain is 3-hydroxy-5-phosphonooxypentane-2,4-dione thiolase (295 aa).

The active-site Schiff-base intermediate with substrate is the Lys-203.

Belongs to the DeoC/FbaB aldolase family. As to quaternary structure, homodecamer.

It localises to the cytoplasm. It catalyses the reaction dihydroxyacetone phosphate + acetyl-CoA = 3-hydroxy-2,4-dioxopentyl phosphate + CoA. Functionally, involved in the degradation of phospho-AI-2, thereby terminating induction of the lsr operon and closing the AI-2 signaling cycle. Catalyzes the transfer of an acetyl moiety from 3-hydroxy-5-phosphonooxypentane-2,4-dione to CoA to form glycerone phosphate and acetyl-CoA. The sequence is that of 3-hydroxy-5-phosphonooxypentane-2,4-dione thiolase from Enterobacter sp. (strain 638).